Consider the following 357-residue polypeptide: Protein BMRF2 (357 aa).

The Virion surface segment spans residues 1 to 11 (MFSCKQHLSLG). The segment at 12-32 (ACVFCLGLLASTPFIWCFVFA) is a transmembrane helix. At 33–46 (NLLSLEIFSPWQTH) the chain is on the virion surface side. Residues 47 to 67 (VYRLGFPTACLMAVLWTLVPA) are membrane-embedded. Over 68 to 70 (KHA) the chain is Virion surface. Positions 71-91 (VRAVTPAIMLNIASALIFFSL) form a transmembrane segment. The Virion surface portion of the chain corresponds to 92–98 (RVYSTST). Positions 99–121 (WVSAPCLFLANLPLLCLWPRLAI) form a transmembrane segment. The Virion surface portion of the chain corresponds to 122–133 (EIVYICPAIHQR). Positions 134 to 154 (FFELGLLLACTIFALSVVSRA) form a transmembrane segment. Topologically, residues 155–158 (LEVS) are virion surface. Residues 159 to 179 (AVFMSPFFIFLALGSGSLAGA) are membrane-embedded. Topologically, residues 180 to 217 (RRNQIYTSGLERRRSIFCARGDHSVASLKETLHKCPWD) are virion surface. An Integrin binding site motif is present at residues 199–201 (RGD). Over 218–238 (LLAISALTVLVVCVMIVLHVH) the chain traverses the membrane. Residues 239–240 (AE) are Virion surface-facing. Residues 241-261 (VFFGLSRYLPLFLCGAMASGG) are membrane-embedded. At 262–267 (LYLGHS) the chain is on the virion surface side. A transmembrane helix spans residues 268–288 (SIIACVMATLCTLTSVVVYFL). Residues 289-298 (HETLGPLGKT) lie on the Virion surface side of the membrane. Over 299-319 (VLFISIFVYYFSGVAALSAAM) the chain traverses the membrane. Over 320 to 335 (RYKLKKFVNGPLVHLR) the chain is Virion surface. A membrane pass occupies residues 336–356 (VVYMCCFVFTFCEYLLVTFIK). Ser-357 is a topological domain (virion surface).

This sequence belongs to the herpesviridae BMRF2 family. In terms of assembly, interacts with BDLF2. Interacts with host beta1 integrin family. Post-translationally, extensively glycosylated by O-linked oligosaccharides.

The protein localises to the virion membrane. It is found in the host cell membrane. Facilitates virus attachment to oral epithelial cells by binding to host beta1 integrin family. Participates in rearrangement of cellular actin to increase intercellular contacts by binding BDLF2 and thereby promote virus cell-to-cell spreading. The protein is Protein BMRF2 of Homo sapiens (Human).